The primary structure comprises 305 residues: MPLNLPDKLPAIELLKEENIFVIDNSRASAQDIRPLKIVILNLMPLKITTETDLVRLLSNTPLQLEISFMKLKSHTSKNTPVEHMKAFYHDFDLMRDEKYDGMIITGAPVEQMPYEDVNYWDEITTIFDWARTHVTSTLYICWAAQAGLYHFYGVPKYPLKQKMFGIFRHHINVQGLPIFRGFDDEFFVPHSRHTEIHREDILKVKELALIAESDESGVYMAMARNGREFFITGHSEYSPYTLDTEYKRDLAKGLPIEMPVNYYKDDNPDNAPVVRWRGHANLLFSNWLNYYVYQETPFDINQIR.

Cys-142 (acyl-thioester intermediate) is an active-site residue. 2 residues coordinate substrate: Lys-163 and Ser-192. The active-site Proton acceptor is the His-235. Residue Glu-237 is part of the active site. Substrate is bound at residue Arg-249.

This sequence belongs to the MetA family.

It is found in the cytoplasm. The catalysed reaction is L-homoserine + acetyl-CoA = O-acetyl-L-homoserine + CoA. It functions in the pathway amino-acid biosynthesis; L-methionine biosynthesis via de novo pathway; O-acetyl-L-homoserine from L-homoserine: step 1/1. In terms of biological role, transfers an acetyl group from acetyl-CoA to L-homoserine, forming acetyl-L-homoserine. The sequence is that of Homoserine O-acetyltransferase from Phocaeicola vulgatus (strain ATCC 8482 / DSM 1447 / JCM 5826 / CCUG 4940 / NBRC 14291 / NCTC 11154) (Bacteroides vulgatus).